A 35-amino-acid chain; its full sequence is Dermonecrotic toxin LgSicTox-beta-LOXN4 (35 aa).

Asp-20 lines the Mg(2+) pocket.

This sequence belongs to the arthropod phospholipase D family. Class II subfamily. It depends on Mg(2+) as a cofactor. Contains 2 disulfide bonds. As to expression, expressed by the venom gland.

The protein localises to the secreted. The catalysed reaction is an N-(acyl)-sphingosylphosphocholine = an N-(acyl)-sphingosyl-1,3-cyclic phosphate + choline. It catalyses the reaction an N-(acyl)-sphingosylphosphoethanolamine = an N-(acyl)-sphingosyl-1,3-cyclic phosphate + ethanolamine. The enzyme catalyses a 1-acyl-sn-glycero-3-phosphocholine = a 1-acyl-sn-glycero-2,3-cyclic phosphate + choline. It carries out the reaction a 1-acyl-sn-glycero-3-phosphoethanolamine = a 1-acyl-sn-glycero-2,3-cyclic phosphate + ethanolamine. Its function is as follows. Dermonecrotic toxins cleave the phosphodiester linkage between the phosphate and headgroup of certain phospholipids (sphingolipid and lysolipid substrates), forming an alcohol (often choline) and a cyclic phosphate. This toxin acts on sphingomyelin (SM). It may also act on ceramide phosphoethanolamine (CPE), lysophosphatidylcholine (LPC) and lysophosphatidylethanolamine (LPE), but not on lysophosphatidylserine (LPS), and lysophosphatidylglycerol (LPG). It acts by transphosphatidylation, releasing exclusively cyclic phosphate products as second products. Induces dermonecrosis, hemolysis, increased vascular permeability, edema, inflammatory response, and platelet aggregation. This is Dermonecrotic toxin LgSicTox-beta-LOXN4 from Loxosceles gaucho (Spider).